The following is a 105-amino-acid chain: Large ribosomal subunit protein uL24 (105 aa).

This sequence belongs to the universal ribosomal protein uL24 family. As to quaternary structure, part of the 50S ribosomal subunit.

One of two assembly initiator proteins, it binds directly to the 5'-end of the 23S rRNA, where it nucleates assembly of the 50S subunit. Functionally, one of the proteins that surrounds the polypeptide exit tunnel on the outside of the subunit. The chain is Large ribosomal subunit protein uL24 from Vibrio parahaemolyticus serotype O3:K6 (strain RIMD 2210633).